The chain runs to 518 residues: Probable cyclic di-GMP phosphodiesterase PdeN (518 aa).

Helical transmembrane passes span 16–36 and 236–256; these read CIVA…LVAW and VWYA…LCYY. In terms of domain architecture, EAL spans 261 to 514; the sequence is RMRPGREIMT…DFVRWLKKPY (254 aa).

It localises to the cell inner membrane. It carries out the reaction 3',3'-c-di-GMP + H2O = 5'-phosphoguanylyl(3'-&gt;5')guanosine + H(+). In terms of biological role, phosphodiesterase (PDE) that catalyzes the hydrolysis of cyclic-di-GMP (c-di-GMP) to 5'-pGpG. This Escherichia coli (strain K12) protein is Probable cyclic di-GMP phosphodiesterase PdeN.